A 513-amino-acid polypeptide reads, in one-letter code: Coniferin beta-glucosidase (513 aa).

The first 23 residues, 1–23 (MEVSVLMWVLLFYSLLGFQVTTA), serve as a signal peptide directing secretion. Residues Gln-44, His-145, and 190-191 (NE) each bind a beta-D-glucoside. Glu-191 functions as the Proton donor in the catalytic mechanism. A disulfide bridge links Cys-210 with Cys-219. N-linked (GlcNAc...) asparagine glycosylation is present at Asn-223. Residues Tyr-336 and Glu-408 each coordinate a beta-D-glucoside. Glu-408 serves as the catalytic Nucleophile. N-linked (GlcNAc...) asparagine glycosylation occurs at Asn-447. A beta-D-glucoside-binding positions include Trp-457, 464 to 465 (EW), and Phe-473.

This sequence belongs to the glycosyl hydrolase 1 family. As to quaternary structure, homodimer. Post-translationally, glycosylated.

It carries out the reaction 4-O-(beta-D-glucosyl)-(E)-coniferol + H2O = (E)-coniferol + D-glucose. Inhibited by glucono-1,5-lactone, but not by bromoconduritol or conduritol B epoxide. Involved in the release of monolignols for lignin biosynthesis. Unable to hydrolyze 4-nitrophenyl beta-cellobioside or alpha-linked methylumbelliferyl glucoside. In Pinus contorta (Shore pine), this protein is Coniferin beta-glucosidase.